Consider the following 206-residue polypeptide: Type III pantothenate kinase (206 aa).

5–12 (DIGNSTAK) is a binding site for ATP. Substrate is bound by residues tyrosine 67 and 72-75 (GVDR). The active-site Proton acceptor is aspartate 74. Aspartate 89 contributes to the K(+) binding site. Residue serine 92 participates in ATP binding. Residue threonine 144 participates in substrate binding.

The protein belongs to the type III pantothenate kinase family. In terms of assembly, homodimer. NH4(+) serves as cofactor. K(+) is required as a cofactor.

It localises to the cytoplasm. It catalyses the reaction (R)-pantothenate + ATP = (R)-4'-phosphopantothenate + ADP + H(+). Its pathway is cofactor biosynthesis; coenzyme A biosynthesis; CoA from (R)-pantothenate: step 1/5. Its function is as follows. Catalyzes the phosphorylation of pantothenate (Pan), the first step in CoA biosynthesis. The chain is Type III pantothenate kinase from Campylobacter hominis (strain ATCC BAA-381 / DSM 21671 / CCUG 45161 / LMG 19568 / NCTC 13146 / CH001A).